Consider the following 92-residue polypeptide: SPbeta prophage-derived DNA-binding protein HU 2 (92 aa).

Thr-4 bears the Phosphothreonine mark. The interval 55 to 77 (RAARKGRNPQTGEEIDIPATKAP) is disordered.

Belongs to the bacterial histone-like protein family. Homodimer.

In terms of biological role, histone-like DNA-binding protein which is capable of wrapping DNA to stabilize it, and thus to prevent its denaturation under extreme environmental conditions. This Bacillus subtilis (strain 168) protein is SPbeta prophage-derived DNA-binding protein HU 2 (hup2).